Consider the following 533-residue polypeptide: 2-isopropylmalate synthase (533 aa).

One can recognise a Pyruvate carboxyltransferase domain in the interval 8–269 (IIIFDTTLRD…YYNPFLGRPA (262 aa)). Positions 17, 208, 210, and 244 each coordinate Mn(2+). Residues 408–533 (RLELVQVSCG…VSANPAKASL (126 aa)) are regulatory domain.

It belongs to the alpha-IPM synthase/homocitrate synthase family. LeuA type 1 subfamily. Homodimer. Mn(2+) serves as cofactor.

It localises to the cytoplasm. The enzyme catalyses 3-methyl-2-oxobutanoate + acetyl-CoA + H2O = (2S)-2-isopropylmalate + CoA + H(+). The protein operates within amino-acid biosynthesis; L-leucine biosynthesis; L-leucine from 3-methyl-2-oxobutanoate: step 1/4. Functionally, catalyzes the condensation of the acetyl group of acetyl-CoA with 3-methyl-2-oxobutanoate (2-ketoisovalerate) to form 3-carboxy-3-hydroxy-4-methylpentanoate (2-isopropylmalate). This chain is 2-isopropylmalate synthase, found in Picosynechococcus sp. (strain ATCC 27264 / PCC 7002 / PR-6) (Agmenellum quadruplicatum).